Reading from the N-terminus, the 126-residue chain is Aspartate 1-decarboxylase (126 aa).

Ser25 functions as the Schiff-base intermediate with substrate; via pyruvic acid in the catalytic mechanism. Ser25 bears the Pyruvic acid (Ser) mark. Substrate is bound at residue Thr57. Tyr58 (proton donor) is an active-site residue. 73–75 is a substrate binding site; sequence GAA.

The protein belongs to the PanD family. In terms of assembly, heterooctamer of four alpha and four beta subunits. The cofactor is pyruvate. Is synthesized initially as an inactive proenzyme, which is activated by self-cleavage at a specific serine bond to produce a beta-subunit with a hydroxyl group at its C-terminus and an alpha-subunit with a pyruvoyl group at its N-terminus.

The protein localises to the cytoplasm. It catalyses the reaction L-aspartate + H(+) = beta-alanine + CO2. The protein operates within cofactor biosynthesis; (R)-pantothenate biosynthesis; beta-alanine from L-aspartate: step 1/1. Catalyzes the pyruvoyl-dependent decarboxylation of aspartate to produce beta-alanine. This is Aspartate 1-decarboxylase from Halorhodospira halophila (strain DSM 244 / SL1) (Ectothiorhodospira halophila (strain DSM 244 / SL1)).